The primary structure comprises 450 residues: Calcium-binding and coiled-coil domain-containing protein 2 (450 aa).

The CLIR signature appears at 133–136 (ILVV). The stretch at 135–349 (VVTTQSEVEE…RENNRLLSYM (215 aa)) forms a coiled coil. The short motif at 203-206 (DCWE) is the LIR-like element. Residues 371 to 381 (DPGLVFGNPYS) form an interaction with LGALS8 region. Residues 395-450 (KKCPTCKSDFAADVFDHNLALEQHLQTLSLNCPICDKTFPAKEKQIFEDHVFCHTL) form an interaction with MYO6 region. The UBZ1-type zinc-finger motif lies at 423-448 (SLNCPICDKTFPAKEKQIFEDHVFCH). Zn(2+) is bound by residues C426, C429, H444, and H448.

The protein belongs to the CALCOCO family. As to quaternary structure, dimer. Part of a complex consisting of CALCOCO2, TAX1BP1 and MYO6. Interacts with GEMIN4. Interacts with ATG8 family members MAP1LC3A, MAP1LC3B, GABARAP, GABARAPL1 and GABARAPL2. Interacts with ATG8 family member MAP1LC3C. Interacts with LGALS8. Interacts with TOM1; the interaction is indirect and is mediated by MYO6, which acts as a bridge between TOM1 and CALCOCO2. Interacts with AZI2.

The protein resides in the cytoplasm. Its subcellular location is the perinuclear region. It is found in the cytoskeleton. It localises to the cytoplasmic vesicle. The protein localises to the autophagosome membrane. Functionally, xenophagy-specific receptor required for autophagy-mediated intracellular bacteria degradation. Acts as an effector protein of galectin-sensed membrane damage that restricts the proliferation of infecting pathogens upon entry into the cytosol by targeting LGALS8-associated bacteria for autophagy. Initially orchestrates bacteria targeting to autophagosomes and subsequently ensures pathogen degradation by regulating pathogen-containing autophagosome maturation. Bacteria targeting to autophagosomes relies on its interaction with MAP1LC3A, MAP1LC3B and/or GABARAPL2, whereas regulation of pathogen-containing autophagosome maturation requires the interaction with MAP3LC3C. May play a role in ruffle formation and actin cytoskeleton organization and seems to negatively regulate constitutive secretion. The sequence is that of Calcium-binding and coiled-coil domain-containing protein 2 from Bos taurus (Bovine).